The chain runs to 158 residues: Small ribosomal subunit protein uS7 (158 aa).

It belongs to the universal ribosomal protein uS7 family. As to quaternary structure, part of the 30S ribosomal subunit. Contacts proteins S9 and S11.

One of the primary rRNA binding proteins, it binds directly to 16S rRNA where it nucleates assembly of the head domain of the 30S subunit. Is located at the subunit interface close to the decoding center, probably blocks exit of the E-site tRNA. In Azobacteroides pseudotrichonymphae genomovar. CFP2, this protein is Small ribosomal subunit protein uS7.